A 397-amino-acid chain; its full sequence is Tryptophan synthase beta chain (397 aa).

Lys-87 is modified (N6-(pyridoxal phosphate)lysine).

The protein belongs to the TrpB family. In terms of assembly, tetramer of two alpha and two beta chains. It depends on pyridoxal 5'-phosphate as a cofactor.

It carries out the reaction (1S,2R)-1-C-(indol-3-yl)glycerol 3-phosphate + L-serine = D-glyceraldehyde 3-phosphate + L-tryptophan + H2O. It participates in amino-acid biosynthesis; L-tryptophan biosynthesis; L-tryptophan from chorismate: step 5/5. In terms of biological role, the beta subunit is responsible for the synthesis of L-tryptophan from indole and L-serine. In Salmonella arizonae (strain ATCC BAA-731 / CDC346-86 / RSK2980), this protein is Tryptophan synthase beta chain.